Reading from the N-terminus, the 970-residue chain is Disease resistance protein RGA2 (970 aa).

Positions 135–438 constitute an NB-ARC domain; sequence RQAVRRETGS…MAHGFLLSKG (304 aa). Position 182 to 189 (182 to 189) interacts with ATP; the sequence is GMGGLGKT. 14 LRR repeats span residues 525–548, 550–571, 573–594, 595–619, 638–662, 672–697, 752–777, 787–811, 813–832, 833–857, 859–882, 884–906, 907–931, and 946–970; these read FISL…IGDL, HLRY…LCKL, NLQT…ETSK, LGSL…IGSL, LGEL…KNDK, KGNL…EVKV, LPCL…DIDV, FPSL…EGEE, FPVL…LSSN, LRAL…MFKN, ANLK…LASL, ALKS…GLEG, LSSL…LQHL, and IKRC…NIYI.

Belongs to the disease resistance NB-LRR family.

Its function is as follows. Disease resistance protein. Resistance proteins guard the plant against pathogens that contain an appropriate avirulence protein via a direct or indirect interaction with this avirulence protein. That triggers a defense system which restricts the pathogen growth. Confers a broad resistance to all known races of P.infestans. This Solanum bulbocastanum (Wild potato) protein is Disease resistance protein RGA2 (RGA2).